The chain runs to 61 residues: Large ribosomal subunit protein uL30 (61 aa).

Belongs to the universal ribosomal protein uL30 family. As to quaternary structure, part of the 50S ribosomal subunit.

The sequence is that of Large ribosomal subunit protein uL30 from Chromobacterium violaceum (strain ATCC 12472 / DSM 30191 / JCM 1249 / CCUG 213 / NBRC 12614 / NCIMB 9131 / NCTC 9757 / MK).